Here is a 231-residue protein sequence, read N- to C-terminus: Small ribosomal subunit protein uS3 (231 aa).

The KH type-2 domain occupies 39–107 (IRELLHKELK…DVVLNIVEIR (69 aa)).

The protein belongs to the universal ribosomal protein uS3 family. As to quaternary structure, part of the 30S ribosomal subunit. Forms a tight complex with proteins S10 and S14.

Binds the lower part of the 30S subunit head. Binds mRNA in the 70S ribosome, positioning it for translation. The protein is Small ribosomal subunit protein uS3 of Nitrobacter winogradskyi (strain ATCC 25391 / DSM 10237 / CIP 104748 / NCIMB 11846 / Nb-255).